A 262-amino-acid polypeptide reads, in one-letter code: MRERLRHCKRVIIKVGTSTLTHPGGHLHLGRMEALVRQIADLHFEGRQVILVTSGAVGAGLGRLGLAERPAEVAAKQALAAVGQGLLMQRYEGLFSEYGLVVGQVLLTREDLEDPDRRASSAQVMERLLAWGVIPIVNENDTVTSEEIRVGDNDTLSARVAALVRADLLILLSDVDGLYPADPHLHPGLSPIPWVSPDDDLDRFAGGPGSANGTGGMVTKVAAARICAEHGIPMVLACGERPDVLRQILAGEEIGTLFSREG.

Lysine 14 contributes to the ATP binding site. Positions 54, 141, and 153 each coordinate substrate. Residues 173–174 (SD) and 214–220 (TGGMVTK) each bind ATP.

This sequence belongs to the glutamate 5-kinase family.

It is found in the cytoplasm. The enzyme catalyses L-glutamate + ATP = L-glutamyl 5-phosphate + ADP. It participates in amino-acid biosynthesis; L-proline biosynthesis; L-glutamate 5-semialdehyde from L-glutamate: step 1/2. Catalyzes the transfer of a phosphate group to glutamate to form L-glutamate 5-phosphate. This is Glutamate 5-kinase from Symbiobacterium thermophilum (strain DSM 24528 / JCM 14929 / IAM 14863 / T).